The chain runs to 528 residues: PH domain-containing protein DDB_G0267786 (528 aa).

A PH domain is found at 59–180 (SDVFSGYLVK…WIEIFKTCCR (122 aa)).

This chain is PH domain-containing protein DDB_G0267786, found in Dictyostelium discoideum (Social amoeba).